A 145-amino-acid polypeptide reads, in one-letter code: Peptide methionine sulfoxide reductase MsrB (145 aa).

One can recognise a MsrB domain in the interval 4-127 (SDELKQRIGD…NSAALKFIPY (124 aa)). Residue C116 is the Nucleophile of the active site.

It belongs to the MsrB Met sulfoxide reductase family.

It catalyses the reaction L-methionyl-[protein] + [thioredoxin]-disulfide + H2O = L-methionyl-(R)-S-oxide-[protein] + [thioredoxin]-dithiol. This is Peptide methionine sulfoxide reductase MsrB from Streptococcus pyogenes serotype M1.